We begin with the raw amino-acid sequence, 501 residues long: Adenylosuccinate synthetase 2, chloroplastic (501 aa).

GTP contacts are provided by residues 87-93 and 115-117; these read GDEGKGK and GHT. D88 acts as the Proton acceptor in catalysis. Positions 88 and 115 each coordinate Mg(2+). IMP-binding positions include 88-91, 113-116, T205, R219, Q300, T315, and R379; these read DEGK and NAGH. The active-site Proton donor is the H116. 375–381 is a substrate binding site; the sequence is NITGRPR. GTP contacts are provided by residues R381, 407–409, and 490–492; these read KLD and GIG.

This sequence belongs to the adenylosuccinate synthetase family. In terms of assembly, homodimer. Requires Mg(2+) as cofactor.

It is found in the plastid. The protein localises to the chloroplast. It catalyses the reaction IMP + L-aspartate + GTP = N(6)-(1,2-dicarboxyethyl)-AMP + GDP + phosphate + 2 H(+). It participates in purine metabolism; AMP biosynthesis via de novo pathway; AMP from IMP: step 1/2. Functionally, plays an important role in the de novo pathway and in the salvage pathway of purine nucleotide biosynthesis. Catalyzes the first committed step in the biosynthesis of AMP from IMP. In Capsicum frutescens (Cayenne pepper), this protein is Adenylosuccinate synthetase 2, chloroplastic.